Here is a 164-residue protein sequence, read N- to C-terminus: Respiratory growth induced protein 2 (164 aa).

It belongs to the RGI1 family.

It is found in the cytoplasm. In terms of biological role, involved in the control of energetic metabolism and significantly contribute to cell fitness, especially under respiratory growth conditions. This Candida glabrata (strain ATCC 2001 / BCRC 20586 / JCM 3761 / NBRC 0622 / NRRL Y-65 / CBS 138) (Yeast) protein is Respiratory growth induced protein 2 (RGI2).